Reading from the N-terminus, the 306-residue chain is UPF0282 protein Pars_1056 (306 aa).

Belongs to the UPF0282 family.

This is UPF0282 protein Pars_1056 from Pyrobaculum arsenaticum (strain DSM 13514 / JCM 11321 / PZ6).